The sequence spans 542 residues: Hydroxylamine reductase (542 aa).

[4Fe-4S] cluster-binding residues include Cys-3, Cys-6, Cys-15, and Cys-21. His-238, Glu-262, Cys-307, Cys-398, Cys-426, Cys-451, Glu-485, and Lys-487 together coordinate hybrid [4Fe-2O-2S] cluster. Position 398 is a cysteine persulfide (Cys-398).

Belongs to the HCP family. It depends on [4Fe-4S] cluster as a cofactor. Hybrid [4Fe-2O-2S] cluster serves as cofactor.

The protein resides in the cytoplasm. It catalyses the reaction A + NH4(+) + H2O = hydroxylamine + AH2 + H(+). In terms of biological role, catalyzes the reduction of hydroxylamine to form NH(3) and H(2)O. The sequence is that of Hydroxylamine reductase from Microcystis aeruginosa (strain NIES-843 / IAM M-2473).